The sequence spans 373 residues: Chemerin-like receptor 1 (373 aa).

Topologically, residues 1–41 (MRMEDEDYNTSISYGDEYPDYLDSIVVLEDLSPLEARVTRI) are extracellular. A glycan (N-linked (GlcNAc...) asparagine) is linked at Asn9. The chain crosses the membrane as a helical span at residues 42–64 (FLVVVYSIVCFLGILGNGLVIII). At 65–75 (ATFKMKKTVNM) the chain is on the cytoplasmic side. A helical transmembrane segment spans residues 76–97 (VWFLNLAVADFLFNVFLPIHIT). The Extracellular portion of the chain corresponds to 98–114 (YAAMDYHWVFGTAMCKI). An intrachain disulfide couples Cys112 to Cys189. The helical transmembrane segment at 115 to 135 (SNFLLIHNMFTSVFLLTIISS) threads the bilayer. The Cytoplasmic portion of the chain corresponds to 136–154 (DRCISVLLPVWSQNHRSVR). A helical membrane pass occupies residues 155–176 (LAYMACMVIWVLAFFLSSPSLV). The Extracellular segment spans residues 177–224 (FRDTANLHGKISCFNNFSLSTPGSSSWPTHSQMDPVGYSRHMVVTVTR). Asn192 is a glycosylation site (N-linked (GlcNAc...) asparagine). A helical transmembrane segment spans residues 225–245 (FLCGFLVPVLIITACYLTIVC). Topologically, residues 246 to 261 (KLQRNRLAKTKKPFKI) are cytoplasmic. Residues 262-282 (IVTIIITFFLCWCPYHTLNLL) traverse the membrane as a helical segment. At 283–300 (ELHHTAMPGSVFSLGLPL) the chain is on the extracellular side. The helical transmembrane segment at 301–320 (ATALAIANSCMNPILYVFMG) threads the bilayer. At 321–373 (QDFKKFKVALFSRLVNALSEDTGHSSYPSHRSFTKMSSMNERTSMNERETGML) the chain is on the cytoplasmic side. Residue Ser339 is modified to Phosphoserine. The interval 341 to 373 (DTGHSSYPSHRSFTKMSSMNERTSMNERETGML) is disordered. Thr342 bears the Phosphothreonine mark. Over residues 344–363 (HSSYPSHRSFTKMSSMNERT) the composition is skewed to polar residues. Ser349, Ser352, and Ser358 each carry phosphoserine. Residues 364–373 (SMNERETGML) show a composition bias toward basic and acidic residues.

It belongs to the chemokine-like receptor (CMKLR) family. Prominently expressed in developing osseous and cartilaginous tissue. Also found in adult parathyroid glands. Expressed in cardiovascular system, brain, kidney, gastrointestinal tissues and myeloid tissues. Expressed in a broad array of tissues associated with hematopoietic and immune function including, spleen, thymus, appendix, lymph node, bone marrow and fetal liver. Among leukocyte populations abundant expression in monocyte-derived macrophage and immature dendritic cells (DCs). High expression in blood monocytes and low levels in polymorphonuclear cells and T-cells. Expressed on endothelial cells. Highly expressed in differentiating adipocytes.

The protein resides in the cell membrane. In terms of biological role, receptor for the chemoattractant adipokine chemerin/RARRES2 and for the omega-3 fatty acid derived molecule resolvin E1. Interaction with RARRES2 initiates activation of G proteins G(i)/G(o) and beta-arrestin pathways inducing cellular responses via second messenger pathways such as intracellular calcium mobilization, phosphorylation of MAP kinases MAPK1/MAPK3 (ERK1/2), TYRO3, MAPK14/P38MAPK and PI3K leading to multifunctional effects, like reduction of immune responses, enhancing of adipogenesis and angionesis. Resolvin E1 down-regulates cytokine production in macrophages by reducing the activation of MAPK1/3 (ERK1/2) and NF-kappa-B. Positively regulates adipogenesis and adipocyte metabolism. Its function is as follows. (Microbial infection) Acts as a coreceptor for several SIV strains (SIVMAC316, SIVMAC239, SIVMACL7E-FR and SIVSM62A), as well as a primary HIV-1 strain (92UG024-2). This Homo sapiens (Human) protein is Chemerin-like receptor 1.